A 323-amino-acid chain; its full sequence is MADLFSTVQEKVAGKDVKIVFPEGLDERILEAVSKLAGNKVLNPIVIGNENEIQAKAKELNLTLGGVKIYDPHTYEGMEDLVQAFVERRKGKATEEQARKALLDENYFGTMLVYKGLADGLVSGAAHSTADTVRPALQIIKTKEGVKKTSGVFIMARGEEQYVFADCAINIAPDSQDLAEIAIESANTAKMFDIEPRVAMLSFSTKGSAKSDETEKVADAVKIAKEKAPELTLDGEFQFDAAFVPSVAEKKAPDSEIKGDANVFVFPSLEAGNIGYKIAQRLGNFEAVGPILQGLNMPVNDLSRGCNAEDVYNLALITAAQAL.

Belongs to the phosphate acetyltransferase and butyryltransferase family.

Its subcellular location is the cytoplasm. It carries out the reaction acetyl-CoA + phosphate = acetyl phosphate + CoA. The protein operates within metabolic intermediate biosynthesis; acetyl-CoA biosynthesis; acetyl-CoA from acetate: step 2/2. The chain is Phosphate acetyltransferase (pta) from Bacillus subtilis (strain 168).